The following is a 635-amino-acid chain: Chaperone protein HtpG (635 aa).

The segment at 1–343 (MTAEATVETR…SNDLSLNVSR (343 aa)) is a; substrate-binding. A b region spans residues 344-560 (EILQQDPNID…EHDMGAQMRR (217 aa)). Positions 561-635 (LLEAAGQAVP…LNKLLLELSN (75 aa)) are c.

Belongs to the heat shock protein 90 family. In terms of assembly, homodimer.

It is found in the cytoplasm. In terms of biological role, molecular chaperone. Has ATPase activity. The chain is Chaperone protein HtpG from Saccharophagus degradans (strain 2-40 / ATCC 43961 / DSM 17024).